The following is a 396-amino-acid chain: Gap junction gamma-1 protein (396 aa).

Topologically, residues 1–22 (MSWSFLTRLLEEIHNHSTFVGK) are cytoplasmic. A helical membrane pass occupies residues 23–45 (IWLTVLIVFRIVLTAVGGESIYY). The Extracellular portion of the chain corresponds to 46–75 (DEQSKFVCNTEQPGCENVCYDAFAPLSHVR). Residues 76-95 (FWVFQIILVATPSVMYLGYA) traverse the membrane as a helical segment. At 96–175 (IHKIAKMEHG…RRIREDGLMK (80 aa)) the chain is on the cytoplasmic side. The interval 146 to 165 (LESEKENKDQNQSKPKHDGR) is disordered. The span at 147–156 (ESEKENKDQN) shows a compositional bias: basic and acidic residues. Residues 176–198 (IYVLQLLARTVFEVGFLVGQYFL) traverse the membrane as a helical segment. Residues 199–228 (YGFQVHPFYVCSRLPCPHKIDCFISRPTEK) lie on the Extracellular side of the membrane. A helical transmembrane segment spans residues 229–248 (TIFLLIMYGVTGLCLLLNIW). Over 249–396 (EMLHLGFGTI…SGDGKTSVWI (148 aa)) the chain is Cytoplasmic. Residues 356–396 (YNHQNNPHGSREKKAKVGSKAGSNKSSASSKSGDGKTSVWI) form a disordered region. The segment covering 373-396 (GSKAGSNKSSASSKSGDGKTSVWI) has biased composition (low complexity).

Belongs to the connexin family. Gamma-type subfamily. A connexon is composed of a hexamer of connexins. Interacts with CNST.

It is found in the cell membrane. Its subcellular location is the cell junction. It localises to the gap junction. Its function is as follows. One gap junction consists of a cluster of closely packed pairs of transmembrane channels, the connexons, through which materials of low MW diffuse from one cell to a neighboring cell. The polypeptide is Gap junction gamma-1 protein (GJC1) (Bos taurus (Bovine)).